We begin with the raw amino-acid sequence, 394 residues long: Bone morphogenetic protein 15 (394 aa).

The signal sequence occupies residues Met1–Phe18. The propeptide occupies Met19–Arg269. Asn87 and Asn238 each carry an N-linked (GlcNAc...) asparagine glycan. 3 disulfide bridges follow: Cys293–Cys359, Cys322–Cys391, and Cys326–Cys393. Residue Asn375 is glycosylated (N-linked (GlcNAc...) asparagine).

It belongs to the TGF-beta family. In terms of assembly, homodimer or heterodimer (Potential). But, in contrast to other members of this family, cannot be disulfide-linked.

It localises to the secreted. Functionally, may be involved in follicular development. Seems to be an oocyte-specific growth/differentiation factor that stimulates folliculogenesis and granulosa cell (GC) growth. This Bos taurus (Bovine) protein is Bone morphogenetic protein 15 (BMP15).